Consider the following 252-residue polypeptide: Glucosamine-6-phosphate deaminase (252 aa).

The active-site Proton acceptor; for enolization step is Asp-67. Asn-137 (for ring-opening step) is an active-site residue. The active-site Proton acceptor; for ring-opening step is the His-139. Catalysis depends on Glu-144, which acts as the For ring-opening step.

Belongs to the glucosamine/galactosamine-6-phosphate isomerase family. NagB subfamily.

The enzyme catalyses alpha-D-glucosamine 6-phosphate + H2O = beta-D-fructose 6-phosphate + NH4(+). The protein operates within amino-sugar metabolism; N-acetylneuraminate degradation; D-fructose 6-phosphate from N-acetylneuraminate: step 5/5. Its function is as follows. Catalyzes the reversible isomerization-deamination of glucosamine 6-phosphate (GlcN6P) to form fructose 6-phosphate (Fru6P) and ammonium ion. This is Glucosamine-6-phosphate deaminase from Staphylococcus aureus (strain Mu3 / ATCC 700698).